We begin with the raw amino-acid sequence, 518 residues long: MARAKRVKRDSVTHIYQTCKQAGTCPPDVVNKVEQTTVADNILKYGSAGVFFGGLGIGSGRGTGGATGYVPLSEGPGIRVGGTPTVVRPSLVPEAIGPVDILPIDTIDPVEPTASSVVPLTESTGPDLLPGEVETIAEIHPVAEGPSVDTPVVTTSTGSSAVLEVAPEPIPPTRVRISRTQYHNPSFQIITESTPAQGESSLADHILVTSGSGGQRIGADITDEIELQELPSRYTFENEEPTPPRRSSTPLQATRAAGRRRGVSLTNRRLVQQVPVENPLFLTQPSRLVRFAFENPAFEEEVTNIFEHDVDAFEEPPDRDFLDVQRLGRPQYSTTPAGYVRVSRLGTRATIRTRSGAQIGSQVHFYRDLSSINTEDPIELQLLGQHSGDASIVQGPVESTFIDVNVSENPLSESVEAFSDDLLLDEAVEDFSGSQLVIGNRRSTTSYTVPRFETTRSGSYYVQDSKGYYVAYPESRNNAEIIYPTPDIPVVVIHTHDNTGDFYLHPSLRWRKRKRKYL.

The Nuclear localization signal signature appears at 1-10 (MARAKRVKRD). Cysteine 19 and cysteine 25 are oxidised to a cystine. Positions 235–261 (TFENEEPTPPRRSSTPLQATRAAGRRR) are disordered. The Nuclear localization signal motif lies at 510–517 (WRKRKRKY).

This sequence belongs to the papillomaviridae L2 protein family. Interacts with major capsid protein L1. Interacts with E2; this interaction inhibits E2 transcriptional activity but not the DNA replication function E2. Interacts with host GADD45GIP1. Interacts with host HSPA8; this interaction is required for L2 nuclear translocation. Interacts with host importins KPNB2 and KPNB3. Forms a complex with importin alpha2-beta1 heterodimers via interaction with the importin alpha2 adapter. Interacts with host DYNLT1; this interaction is essential for virus intracellular transport during entry. Interacts (via C-terminus) with host retromer subunits VPS35 and VPS29. In terms of processing, highly phosphorylated.

The protein localises to the virion. Its subcellular location is the host nucleus. It is found in the host early endosome. The protein resides in the host Golgi apparatus. Its function is as follows. Minor protein of the capsid that localizes along the inner surface of the virion, within the central cavities beneath the L1 pentamers. Plays a role in capsid stabilization through interaction with the major capsid protein L1. Once the virion enters the host cell, L2 escorts the genomic DNA into the nucleus by promoting escape from the endosomal compartments and traffic through the host Golgi network. Mechanistically, the C-terminus of L2 possesses a cell-penetrating peptide that protudes from the host endosome, interacts with host cytoplasmic retromer cargo and thereby mediates the capsid delivery to the host trans-Golgi network. Plays a role through its interaction with host dynein in the intracellular microtubule-dependent transport of viral capsid toward the nucleus. Mediates the viral genome import into the nucleus through binding to host importins. Once within the nucleus, L2 localizes viral genomes to host PML bodies in order to activate early gene expression for establishment of infection. Later on, promotes late gene expression by interacting with the viral E2 protein and by inhibiting its transcriptional activation functions. During virion assembly, encapsidates the genome by direct interaction with the viral DNA. The protein is Minor capsid protein L2 of Human papillomavirus 36.